A 495-amino-acid chain; its full sequence is Two-component response regulator-like APRR3 (495 aa).

The region spanning 65 to 183 is the Response regulatory domain; the sequence is KVLLVENDDS…ELKNLWQHVW (119 aa). 2 disordered regions span residues 188 to 441 and 465 to 495; these read SSSG…RWAQ and HSRK…SEDN. Positions 206–217 are enriched in polar residues; sequence PESTQGSENDAS. Residues 231-248 show a composition bias toward low complexity; that stretch reads GLSNQDGGSDNGSGTQSS. Residues 256-265 are compositionally biased toward polar residues; that stretch reads TKSTSPSNQF. Over residues 284–293 the composition is skewed to basic and acidic residues; sequence RLKEAEDQKE. Positions 294–304 are enriched in polar residues; it reads QIGTGSQTGMS. Positions 307 to 319 are enriched in basic and acidic residues; sequence KKAEEPGDLEKNA. Over residues 335–350 the composition is skewed to polar residues; it reads NRSSGNSQVESKAPSS. A coiled-coil region spans residues 349-372; that stretch reads SSNREDLQSLEQTLKKTREDRDYK. Residues 351 to 378 are compositionally biased toward basic and acidic residues; it reads NREDLQSLEQTLKKTREDRDYKVGDRSV. Polar residues-rich tracts occupy residues 380 to 395 and 420 to 436; these read RHSN…NGAT and GSSS…SSGS. A CCT domain is found at 442 to 484; it reads REAALMKFRLKRKERCFEKKVRYHSRKKLAEQRPHVKGQFIRK. Positions 483 to 495 are enriched in basic and acidic residues; it reads RKRDDHKSGSEDN.

Belongs to the ARR-like family. Interacts with APRR1/TOC1 (via N-terminus). Post-translationally, phosphorylated by WNK1; during the night. Phosphorylation is required for optimal interaction with APRR1/TOC1.

It is found in the nucleus. Controls photoperiodic flowering response. Component of the circadian clock. Controls the degradation of APRR1/TOC1 by the SCF(ZTL) complex. Expression of several members of the ARR-like family is controlled by circadian rhythm. The particular coordinated sequential expression of APRR9, APRR7, APRR5, APRR3 and APPR1 result to circadian waves that may be at the basis of the endogenous circadian clock. The protein is Two-component response regulator-like APRR3 (APRR3) of Arabidopsis thaliana (Mouse-ear cress).